The primary structure comprises 289 residues: Four and a half LIM domains protein 3 (289 aa).

S2 is subject to N-acetylserine. The C4-type zinc-finger motif lies at 7–31 (CAKCNESLYGRKYIQTDSGPYCVPC). 2 LIM zinc-binding domains span residues 40–92 (CAEC…CNEC) and 101–153 (CSAC…CVPC). Residue K157 is modified to N6-acetyllysine. LIM zinc-binding domains are found at residues 162–212 (CARC…CVAC) and 221–275 (CSSC…FVPD). K244 bears the N6-acetyllysine mark.

Interacts with SOX15; the interaction recruits FHL3 to FOXK1 promoters where it acts as a transcriptional coactivator of FOXK1. As to expression, expressed in myogenic progenitor cells (at protein level). Expressed in skeletal striated muscle and the heart. Expressed to a lesser extent, in lung, and kidney. Expressed in skin and skeletal muscles such as the masseter, tongue, tibialis anterior and plantar muscles.

The protein resides in the nucleus. The protein localises to the cytoplasm. In terms of biological role, recruited by SOX15 to FOXK1 promoters where it acts as a transcriptional coactivator of FOXK1. This is Four and a half LIM domains protein 3 (Fhl3) from Mus musculus (Mouse).